A 174-amino-acid polypeptide reads, in one-letter code: Interleukin-1 receptor antagonist protein (174 aa).

The first 23 residues, Met-1 to Cys-23, serve as a signal peptide directing secretion. A disulfide bond links Cys-89 and Cys-139. Residue Asn-107 is glycosylated (N-linked (GlcNAc...) asparagine).

This sequence belongs to the IL-1 family.

The protein resides in the secreted. Anti-inflammatory antagonist of interleukin-1 family of proinflammatory cytokines such as interleukin-1beta/IL1B and interleukin-1alpha/IL1A. Protects from immune dysregulation and uncontrolled systemic inflammation triggered by IL1 for a range of innate stimulatory agents such as pathogens. This chain is Interleukin-1 receptor antagonist protein (IL1RN), found in Bos taurus (Bovine).